A 149-amino-acid chain; its full sequence is Nucleoside diphosphate kinase (149 aa).

K9, F57, R85, T91, R102, and N112 together coordinate ATP. H115 (pros-phosphohistidine intermediate) is an active-site residue.

Belongs to the NDK family. In terms of assembly, homotetramer. The cofactor is Mg(2+).

Its subcellular location is the cytoplasm. It carries out the reaction a 2'-deoxyribonucleoside 5'-diphosphate + ATP = a 2'-deoxyribonucleoside 5'-triphosphate + ADP. The enzyme catalyses a ribonucleoside 5'-diphosphate + ATP = a ribonucleoside 5'-triphosphate + ADP. In terms of biological role, major role in the synthesis of nucleoside triphosphates other than ATP. The ATP gamma phosphate is transferred to the NDP beta phosphate via a ping-pong mechanism, using a phosphorylated active-site intermediate. The sequence is that of Nucleoside diphosphate kinase from Staphylococcus saprophyticus subsp. saprophyticus (strain ATCC 15305 / DSM 20229 / NCIMB 8711 / NCTC 7292 / S-41).